The chain runs to 583 residues: MAVTLVTSFASSSSRFHFRSFSSSPSSLSSCFVRFQFPSRLRLAFAVTPLYSSSRAMAHTISHATLGLTQANSVDHPKISFSGKEIDVTEWKGDILAVGVTEKDMAKDVNSKFENPILKKLDAHLGGLLADVSSEEDFSGKPGQSTVLRLPGLGSKRVGLIGLGKSASTPSAFQSLGEAVAAAAKASQASSVAVVLASSESVSNESKLCSASAIASGTVLGLFEDSRYKSESKKPSLKSVDIIGFGSGPELEKKLKYAEHVSYGVIFGKELVNSPANVLTPAVLAEEALNLASMYSDVMTANILNEEQCKELKMGSYLAVAAASANPPHFIHLIYKPSSGPVKTKLALVGKGLTFDSGGYNIKTGPGCLIELMKFDMGGSAAVLGAAKAIGQIKPPGVEVHFIVAACENMISGTGMRPGDVLTASNGKTIEVNNTDAEGRLTLADALVYACNQGVDKVVDLATLTGACIIALGTSMAGIYTPSDKLAKEVIAASERSGEKLWRMPMEESYWEMMKSGVADMVNTGGRAGGSITAALFLKQFVSEDVEWMHIDMAGPVWNEKKKAATGFGVATLVEWVQNHSSS.

A chloroplast-targeting transit peptide spans 1–70; that stretch reads MAVTLVTSFA…ISHATLGLTQ (70 aa). Mn(2+) is bound by residues K351 and D356. The active site involves K363. The Mn(2+) site is built by D376, D436, and E438. Residue R440 is part of the active site.

The protein belongs to the peptidase M17 family. Homohexamer (dimer of homotrimers). Requires Mn(2+) as cofactor.

The protein resides in the plastid. The protein localises to the chloroplast. It catalyses the reaction Release of an N-terminal amino acid, Xaa-|-Yaa-, in which Xaa is preferably Leu, but may be other amino acids including Pro although not Arg or Lys, and Yaa may be Pro. Amino acid amides and methyl esters are also readily hydrolyzed, but rates on arylamides are exceedingly low.. The enzyme catalyses Release of N-terminal proline from a peptide.. Presumably involved in the processing and regular turnover of intracellular proteins. Catalyzes the removal of unsubstituted N-terminal amino acids from various peptides. Possesses leucine aminopeptidase activity against the model substrate leucine-amido methyl coumarin. Does not seem to possess Cys-Gly dipeptidase activity. In terms of biological role, functions as a molecular chaperone to protect proteins from heat-induced damage. This is Leucine aminopeptidase 2, chloroplastic from Arabidopsis thaliana (Mouse-ear cress).